A 309-amino-acid chain; its full sequence is HPr kinase/phosphorylase (309 aa).

Active-site residues include histidine 138 and lysine 159. 153-160 (GDSGIGKS) is an ATP binding site. Serine 160 serves as a coordination point for Mg(2+). Aspartate 177 (proton acceptor; for phosphorylation activity. Proton donor; for dephosphorylation activity) is an active-site residue. The segment at 201 to 210 (LEIRGVGIID) is important for the catalytic mechanism of both phosphorylation and dephosphorylation. Residue glutamate 202 coordinates Mg(2+). Arginine 243 is an active-site residue. Residues 264-269 (PVKTGR) are important for the catalytic mechanism of dephosphorylation.

This sequence belongs to the HPrK/P family. In terms of assembly, homohexamer. The cofactor is Mg(2+).

It carries out the reaction [HPr protein]-L-serine + ATP = [HPr protein]-O-phospho-L-serine + ADP + H(+). It catalyses the reaction [HPr protein]-O-phospho-L-serine + phosphate + H(+) = [HPr protein]-L-serine + diphosphate. In terms of biological role, catalyzes the ATP- as well as the pyrophosphate-dependent phosphorylation of a specific serine residue in HPr, a phosphocarrier protein of the phosphoenolpyruvate-dependent sugar phosphotransferase system (PTS). HprK/P also catalyzes the pyrophosphate-producing, inorganic phosphate-dependent dephosphorylation (phosphorolysis) of seryl-phosphorylated HPr (P-Ser-HPr). The two antagonistic activities of HprK/P are regulated by several intracellular metabolites, which change their concentration in response to the absence or presence of rapidly metabolisable carbon sources (glucose, fructose, etc.) in the growth medium. Therefore, by controlling the phosphorylation state of HPr, HPrK/P is a sensor enzyme that plays a major role in the regulation of carbon metabolism and sugar transport: it mediates carbon catabolite repression (CCR), and regulates PTS-catalyzed carbohydrate uptake and inducer exclusion. The protein is HPr kinase/phosphorylase of Streptococcus thermophilus (strain ATCC BAA-250 / LMG 18311).